Here is a 173-residue protein sequence, read N- to C-terminus: Inorganic pyrophosphatase (173 aa).

Residues Lys-29, Arg-43, and Tyr-55 each contribute to the substrate site. Mg(2+) is bound by residues Asp-65, Asp-70, and Asp-102. Tyr-141 is a substrate binding site.

This sequence belongs to the PPase family. In terms of assembly, homohexamer. Mg(2+) is required as a cofactor.

It is found in the cytoplasm. It carries out the reaction diphosphate + H2O = 2 phosphate + H(+). Its function is as follows. Catalyzes the hydrolysis of inorganic pyrophosphate (PPi) forming two phosphate ions. This chain is Inorganic pyrophosphatase, found in Gluconobacter oxydans (strain 621H) (Gluconobacter suboxydans).